The primary structure comprises 672 residues: MEPPCTSDCSQIKVFYYLDDETTPYVSVIEAREGVATLGNFKNSFTKRGYKYYAKELDPDIQREVKVELTTDSDRLRKSQNGFYEIFLVSTPGYGTLPRNSGTMTRPQRTALDKRRRRSADFDATPYSDASLAPSTIVSRRAGEHLAELYTSNSEDPYQYDEHTRRTGDDSSLYEPLAARDMNKIYDDDRRRKKQKKERFRRPYVPSTISSATESSVNSGLPRILEIYLPMKNVPYLGLSVCTIDGHIFVSEIAPEGAVEKDGRVNVGDQILQVNRVSFEELSGPQAVRSLREAASSKRPITLYISKFARGAPSEYDDPLASMASETMPLDVGVWVETAVQNTEKMKALGLDPQEQTATTIDDGTLPFTSTASDDEERMLYDQRRNGIPRALIEEAERKRENEQNEKIEQLTEMIDPIIVVRSMARPDSGLAVKNRKWLKILVPMSFIGRDLVDWLVDHMADIHNRKKARIYAARLLAAGLIRHVVSKLTFTEKCYYVFGDGILGNDRNSTDTTGTSGTTMRVEATTEVTYVGSPAPHALAARVGRNIPHRLETTTLSPVAHDQTWLRRRRDCESPMTNDYASMVGESQIGMNPVGNYHVFGTKNNHRQVPAPSQVTSSSLTNGSGGLGGPPPTPLSSTMVLAASPIQSQNAVNHDFDGENSSNSRTRILRT.

Residues 9 to 91 enclose the DIX domain; that stretch reads CSQIKVFYYL…GFYEIFLVST (83 aa). Disordered regions lie at residues 97-127, 150-174, and 187-215; these read LPRN…ATPY, YTSN…SSLY, and DDDR…ATES. Residues 98 to 108 are compositionally biased toward polar residues; it reads PRNSGTMTRPQ. Residues 160–169 show a composition bias toward basic and acidic residues; that stretch reads YDEHTRRTGD. Positions 191 to 202 are enriched in basic residues; it reads RRKKQKKERFRR. The 69-residue stretch at 226–294 folds into the PDZ domain; that stretch reads EIYLPMKNVP…PQAVRSLREA (69 aa). The region spanning 427–501 is the DEP domain; sequence PDSGLAVKNR…TEKCYYVFGD (75 aa). The disordered stretch occupies residues 604–672; it reads KNNHRQVPAP…SNSRTRILRT (69 aa). Residues 660–672 show a composition bias toward polar residues; it reads ENSSNSRTRILRT.

This sequence belongs to the DSH family.

It localises to the cytoplasm. The protein resides in the cell cortex. It is found in the cell membrane. Its subcellular location is the cell junction. Plays a role in the signal transduction pathways mediated by multiple Wnt genes. Functions redundantly with other dishevelled family members throughout development. During embryonic and larval development, controls cell migration and/or cell fate specification of hypodermal cells, hypodermal seam cells, vulval precursor cells and, through distal tip cell migration, somatic gonad precursor cells. In early embryos, regulates the orientation of the mitotic spindle of blastomeres and specifically, along with dsh-2, is required for the correct mitotic spindle orientation of the ABar blastomere division plane. Controls the polarity and the asymmetric localization of downstream components of the wnt/beta-catenin asymmetry pathway, and in particular, controls the asymmetric localization of the wnt receptor lin-17/Frizzled in ectodermal blast B cells. May act redundantly with dsh-2 to regulate the expression and nuclear localization of the beta-catenin homolog wrm-2, but alone seems to be required for the polarity of wrm-2 during the asymmetric cell division of hypodermal seam cells. Also, maintains the polarity and migration of QL neuroblasts in larvae. During the embryonic development of touch receptor neurons, may act redundantly with dsh-1, downstream of wnt signaling ligands and the wnt receptor lin-17/Frizzled, to direct the growth of neurites of touch receptor neurons towards the anterior of the body of the worm and towards the PLM touch receptor neuron and other tail neurons. May play a role in the guidance of posterior D-type motor neuron axons along the anteroposterior axis. The polypeptide is Segment polarity protein dishevelled homolog mig-5 (Caenorhabditis elegans).